The following is a 132-amino-acid chain: Small ribosomal subunit protein uS8 (132 aa).

This sequence belongs to the universal ribosomal protein uS8 family. In terms of assembly, part of the 30S ribosomal subunit. Contacts proteins S5 and S12.

In terms of biological role, one of the primary rRNA binding proteins, it binds directly to 16S rRNA central domain where it helps coordinate assembly of the platform of the 30S subunit. This chain is Small ribosomal subunit protein uS8, found in Syntrophomonas wolfei subsp. wolfei (strain DSM 2245B / Goettingen).